The chain runs to 493 residues: Glutamyl-tRNA(Gln) amidotransferase subunit A (493 aa).

Residues lysine 78 and serine 158 each act as charge relay system in the active site. The active-site Acyl-ester intermediate is the serine 182.

This sequence belongs to the amidase family. GatA subfamily. Heterotrimer of A, B and C subunits.

It catalyses the reaction L-glutamyl-tRNA(Gln) + L-glutamine + ATP + H2O = L-glutaminyl-tRNA(Gln) + L-glutamate + ADP + phosphate + H(+). Its function is as follows. Allows the formation of correctly charged Gln-tRNA(Gln) through the transamidation of misacylated Glu-tRNA(Gln) in organisms which lack glutaminyl-tRNA synthetase. The reaction takes place in the presence of glutamine and ATP through an activated gamma-phospho-Glu-tRNA(Gln). The sequence is that of Glutamyl-tRNA(Gln) amidotransferase subunit A from Rickettsia bellii (strain RML369-C).